The sequence spans 122 residues: Large ribosomal subunit protein bL12 (122 aa).

It belongs to the bacterial ribosomal protein bL12 family. In terms of assembly, homodimer. Part of the ribosomal stalk of the 50S ribosomal subunit. Forms a multimeric L10(L12)X complex, where L10 forms an elongated spine to which 2 to 4 L12 dimers bind in a sequential fashion. Binds GTP-bound translation factors.

Its function is as follows. Forms part of the ribosomal stalk which helps the ribosome interact with GTP-bound translation factors. Is thus essential for accurate translation. This chain is Large ribosomal subunit protein bL12, found in Mycoplasma genitalium (strain ATCC 33530 / DSM 19775 / NCTC 10195 / G37) (Mycoplasmoides genitalium).